Consider the following 190-residue polypeptide: Negative regulator YfiR (190 aa).

A GMP-binding site is contributed by R60. Cystine bridges form between C71–C110 and C145–C152. GMP is bound by residues R175 and H177.

In terms of assembly, homodimer. Interacts with TpbB/YfiN. Interacts with YfiB. The YfiB-YfiR complex is a 2:2 heterotetramer. Post-translationally, cys-71 and Cys-110 form a disulfide bond in the oxidized form but maintain their free form in the non-oxidized YfiR structure. The Cys-145-Cys-152 disulfide bond is well formed in both structures. The Cys145-Cys152 disulfide bond, but not Cys-71-Cys-110, plays an important role in maintaining the correct folding of the protein.

It is found in the periplasm. With respect to regulation, tpbB/YfiN repression is released through an YfiB-dependent sequestration of YfiR to the outer membrane. Binds vitamin B6 (VB6) or L-Trp at the periphery of the dimer, and both VB6 and L-Trp are able to reduce biofilm formation induced by YfiB L43P mutant. However, VB6 or L-Trp alone may have little effects in interrupting the YfiB-YfiR interaction. GMP enhances the binding affinity between YfiB and YfiR. Functionally, negatively regulates the activity of the diguanylate cyclase TpbB/YfiN, leading to decreased c-di-GMP production. Inhibits TpbB/YfiN allosterically, through a hydrophobic interaction between the C-terminus of YfiR and a conserved region of the periplasmic PAS domain of TpbB/YfiN. Under reducing conditions, may also act as an YfiB-independent sensing device that is able to activate TpbB/YfiN in response to the redox status of the periplasm. Part of the YfiB-TpbB-YfiR (or yfiBNR) system, encoding a tripartite signaling module that modulates intracellular c-di-GMP levels. The system is a key regulator of the small colony variant (SCV) phenotype, and plays an important role in biofilm formation and in vivo persistence. The c-di-GMP produced by TpbB/YfiN stimulates the production of the Pel and Psl exopolysaccharides, which promotes surface attachment, generates an SCV phenotype and confers resistance against phagocytosis. In Pseudomonas aeruginosa (strain ATCC 15692 / DSM 22644 / CIP 104116 / JCM 14847 / LMG 12228 / 1C / PRS 101 / PAO1), this protein is Negative regulator YfiR.